Consider the following 156-residue polypeptide: Small ribosomal subunit protein uS7 (156 aa).

Belongs to the universal ribosomal protein uS7 family. Part of the 30S ribosomal subunit. Contacts proteins S9 and S11.

One of the primary rRNA binding proteins, it binds directly to 16S rRNA where it nucleates assembly of the head domain of the 30S subunit. Is located at the subunit interface close to the decoding center, probably blocks exit of the E-site tRNA. This chain is Small ribosomal subunit protein uS7, found in Geotalea daltonii (strain DSM 22248 / JCM 15807 / FRC-32) (Geobacter daltonii).